We begin with the raw amino-acid sequence, 147 residues long: Hemoglobin subunit delta (147 aa).

The region spanning 3-147 is the Globin domain; it reads HLTPEEKALV…VANALAHKYH (145 aa). The residue at position 51 (S51) is a Phosphoserine. Heme b-binding residues include H64 and H93.

The protein belongs to the globin family. In terms of assembly, heterotetramer of two delta chains and two alpha chains. As to expression, red blood cells.

This Trichechus manatus (Caribbean manatee) protein is Hemoglobin subunit delta (HBD).